A 175-amino-acid polypeptide reads, in one-letter code: Adenine phosphoribosyltransferase (175 aa).

The protein belongs to the purine/pyrimidine phosphoribosyltransferase family. Homodimer.

The protein localises to the cytoplasm. The enzyme catalyses AMP + diphosphate = 5-phospho-alpha-D-ribose 1-diphosphate + adenine. Its pathway is purine metabolism; AMP biosynthesis via salvage pathway; AMP from adenine: step 1/1. Catalyzes a salvage reaction resulting in the formation of AMP, that is energically less costly than de novo synthesis. The chain is Adenine phosphoribosyltransferase from Maricaulis maris (strain MCS10) (Caulobacter maris).